Consider the following 131-residue polypeptide: Aspartate 1-decarboxylase (131 aa).

Ser25 (schiff-base intermediate with substrate; via pyruvic acid) is an active-site residue. Ser25 is modified (pyruvic acid (Ser)). Substrate is bound at residue Thr57. Tyr58 functions as the Proton donor in the catalytic mechanism. Residue 73–75 (GSA) coordinates substrate.

Belongs to the PanD family. As to quaternary structure, heterooctamer of four alpha and four beta subunits. It depends on pyruvate as a cofactor. In terms of processing, is synthesized initially as an inactive proenzyme, which is activated by self-cleavage at a specific serine bond to produce a beta-subunit with a hydroxyl group at its C-terminus and an alpha-subunit with a pyruvoyl group at its N-terminus.

The protein localises to the cytoplasm. It carries out the reaction L-aspartate + H(+) = beta-alanine + CO2. It functions in the pathway cofactor biosynthesis; (R)-pantothenate biosynthesis; beta-alanine from L-aspartate: step 1/1. Its function is as follows. Catalyzes the pyruvoyl-dependent decarboxylation of aspartate to produce beta-alanine. In Leptothrix cholodnii (strain ATCC 51168 / LMG 8142 / SP-6) (Leptothrix discophora (strain SP-6)), this protein is Aspartate 1-decarboxylase.